Consider the following 327-residue polypeptide: Zinc transport protein ZntB (327 aa).

At M1 to M273 the chain is on the cytoplasmic side. Residues A274 to I294 form a helical membrane-spanning segment. Residues P295 to R300 lie on the Periplasmic side of the membrane. The helical transmembrane segment at F301–L321 threads the bilayer. Residues H322–L327 lie on the Cytoplasmic side of the membrane.

It belongs to the CorA metal ion transporter (MIT) (TC 1.A.35) family.

The protein resides in the cell inner membrane. The enzyme catalyses Zn(2+)(out) + H(+)(out) = Zn(2+)(in) + H(+)(in). Its function is as follows. Zinc transporter. Acts as a Zn(2+):proton symporter, which likely mediates zinc ion uptake. The polypeptide is Zinc transport protein ZntB (Salmonella choleraesuis (strain SC-B67)).